A 1027-amino-acid chain; its full sequence is Presequence protease, mitochondrial (1027 aa).

The N-terminal 22 residues, 1-22, are a transit peptide targeting the mitochondrion; the sequence is MIRQCRAGLRLCRALYQTSYRW. A Zn(2+)-binding site is contributed by His98. Glu101 acts as the Proton acceptor in catalysis. 2 residues coordinate Zn(2+): His102 and Glu199. Cys113 and Cys550 are disulfide-bonded. The interval 800–829 is disordered; it reads KKERKSIRPHVVEKSSSPSSSGSEISRRAT. Positions 814-823 are enriched in low complexity; sequence SSSPSSSGSE.

The protein belongs to the peptidase M16 family. PreP subfamily. In terms of assembly, monomer and homodimer; homodimerization is induced by binding of the substrate. It depends on Zn(2+) as a cofactor. A disulfide bond locks the enzyme in the closed conformation preventing substrate entry into the catalytic chamber.

It localises to the mitochondrion matrix. Mainly exists in a closed and catalytically competent conformation but a closed-to-open switch allows substrate entry into the catalytic chamber. Substrate binding induces closure and dimerization. A disulfide bond may lock the enzyme in a closed conformation preventing substrate entry into the catalytic chamber, participating in redox regulation of the enzyme. Inhibited by metal-chelating agents. Inhibited by nickel and zinc excess, and slightly activated by manganese. Its function is as follows. Metalloendopeptidase of the mitochondrial matrix that functions in peptide cleavage and degradation rather than in protein processing. Has an ATP-independent activity. Specifically cleaves peptides in the range of 5 to 65 residues. Shows a preference for cleavage after small polar residues and before basic residues, but without any positional preference. Degrades the transit peptides of mitochondrial proteins after their cleavage. Also degrades other unstructured peptides. This is Presequence protease, mitochondrial (pitrm1) from Xenopus tropicalis (Western clawed frog).